We begin with the raw amino-acid sequence, 472 residues long: Ribosomal protein uS12 methylthiotransferase RimO (472 aa).

Residues 33–143 (NRIGFVSLGC…VLKHVHKYVP (111 aa)) enclose the MTTase N-terminal domain. [4Fe-4S] cluster-binding residues include cysteine 42, cysteine 78, cysteine 107, cysteine 175, cysteine 179, and cysteine 182. The region spanning 161 to 398 (LTPKHYAYLK…MELQAEISAE (238 aa)) is the Radical SAM core domain. In terms of domain architecture, TRAM spans 401–467 (ARFVGRTLDI…EHDLWAEVVD (67 aa)).

Belongs to the methylthiotransferase family. RimO subfamily. [4Fe-4S] cluster serves as cofactor.

It is found in the cytoplasm. It carries out the reaction L-aspartate(89)-[ribosomal protein uS12]-hydrogen + (sulfur carrier)-SH + AH2 + 2 S-adenosyl-L-methionine = 3-methylsulfanyl-L-aspartate(89)-[ribosomal protein uS12]-hydrogen + (sulfur carrier)-H + 5'-deoxyadenosine + L-methionine + A + S-adenosyl-L-homocysteine + 2 H(+). Its function is as follows. Catalyzes the methylthiolation of an aspartic acid residue of ribosomal protein uS12. The protein is Ribosomal protein uS12 methylthiotransferase RimO of Shewanella sp. (strain W3-18-1).